The following is a 158-amino-acid chain: 6,7-dimethyl-8-ribityllumazine synthase (158 aa).

5-amino-6-(D-ribitylamino)uracil-binding positions include Phe23, 61–63 (SFE), and 85–87 (AVI). 90-91 (ET) lines the (2S)-2-hydroxy-3-oxobutyl phosphate pocket. His93 acts as the Proton donor in catalysis. Residue Phe118 coordinates 5-amino-6-(D-ribitylamino)uracil. Position 132 (Arg132) interacts with (2S)-2-hydroxy-3-oxobutyl phosphate.

The protein belongs to the DMRL synthase family.

The enzyme catalyses (2S)-2-hydroxy-3-oxobutyl phosphate + 5-amino-6-(D-ribitylamino)uracil = 6,7-dimethyl-8-(1-D-ribityl)lumazine + phosphate + 2 H2O + H(+). The protein operates within cofactor biosynthesis; riboflavin biosynthesis; riboflavin from 2-hydroxy-3-oxobutyl phosphate and 5-amino-6-(D-ribitylamino)uracil: step 1/2. Its function is as follows. Catalyzes the formation of 6,7-dimethyl-8-ribityllumazine by condensation of 5-amino-6-(D-ribitylamino)uracil with 3,4-dihydroxy-2-butanone 4-phosphate. This is the penultimate step in the biosynthesis of riboflavin. The polypeptide is 6,7-dimethyl-8-ribityllumazine synthase (Prochlorococcus marinus (strain MIT 9301)).